Here is a 254-residue protein sequence, read N- to C-terminus: Transmembrane protein 70, mitochondrial (254 aa).

The N-terminal 78 residues, 1–78 (MLFLALGGPW…PVCWERGVRC (78 aa)), are a transit peptide targeting the mitochondrion. Residues 79–112 (SHTQLDKSEDGRLIYTGNLARTVFGVKCFSYSTS) lie on the Mitochondrial matrix side of the membrane. The helical transmembrane segment at 113–133 (LISLAFLPYIFAQNNVIFGSL) threads the bilayer. Residues 134–136 (PLQ) lie on the Mitochondrial intermembrane side of the membrane. The helical transmembrane segment at 137-157 (ILFYGTIGSFTVITPALLHFL) threads the bilayer. Residues 158–254 (TKGYVIRLYH…SEKKQLKEEK (97 aa)) lie on the Mitochondrial matrix side of the membrane.

This sequence belongs to the TMEM70 family. As to quaternary structure, homooligomer. Interacts (homooligomer form) with ATP5MC1; this interaction facilitates the oligomer formation of subunit c/ATP5MC1 (c-ring) and the c-ring membrane insertion and also protects ATP5MC1 against intramitochondrial proteolysis. Interacts with the core subunits TMEM126B, NDUFAF1, ECSIT and ACAD9 of the MCIA complex. Interacts with ATP5MC3, TMEM242 and TIMMDC1.

It is found in the mitochondrion inner membrane. In terms of biological role, scaffold protein that participates in the c-ring assembly of mitochondrial ATP synthase (F(1)F(0) ATP synthase or complex V) by facilitating the membrane insertion and oligomer formation of the subunit c/ATP5MC1 through its interaction. Therefore, participates in the early stage of mitochondrial ATP synthase biogenesis and also protects subunit c/ATP5MC1 against intramitochondrial proteolysis. In addition, binds the mitochondrial proton-transporting ATP synthase complexes I and may play a role in the stability of its membrane-bound subassemblies. The protein is Transmembrane protein 70, mitochondrial of Bos taurus (Bovine).